A 222-amino-acid polypeptide reads, in one-letter code: Interleukin-12 subunit alpha (222 aa).

A signal peptide spans 1 to 25 (MCPLRNLLLVATLVLLNHLDHLSLG). Intrachain disulfides connect Cys40-Cys113, Cys67-Cys199, and Cys88-Cys126. N-linked (GlcNAc...) asparagine glycans are attached at residues Asn42 and Asn96.

The protein belongs to the IL-6 superfamily. As to quaternary structure, heterodimer with IL12B; disulfide-linked. This heterodimer is known as interleukin IL-12. Heterodimer with EBI3/IL27B; not disulfide-linked. This heterodimer is known as interleukin IL-35. Interacts with NBR1; this interaction promotes IL-12 secretion.

It localises to the secreted. Heterodimerizes with IL12B to form the IL-12 cytokine or with EBI3/IL27B to form the IL-35 cytokine. IL-12 is primarily produced by professional antigen-presenting cells (APCs) such as B-cells and dendritic cells (DCs) as well as macrophages and granulocytes and regulates T-cell and natural killer-cell responses, induces the production of interferon-gamma (IFN-gamma), favors the differentiation of T-helper 1 (Th1) cells and is an important link between innate resistance and adaptive immunity. Mechanistically, exerts its biological effects through a receptor composed of IL12R1 and IL12R2 subunits. Binding to the receptor results in the rapid tyrosine phosphorylation of a number of cellular substrates including the JAK family kinases TYK2 and JAK2. In turn, recruited STAT4 gets phosphorylated and translocates to the nucleus where it regulates cytokine/growth factor responsive genes. As part of IL-35, plays essential roles in maintaining the immune homeostasis of the liver microenvironment and also functions as an immune-suppressive cytokine. Mediates biological events through unconventional receptors composed of IL12RB2 and gp130/IL6ST heterodimers or homodimers. Signaling requires the transcription factors STAT1 and STAT4, which form a unique heterodimer that binds to distinct DNA sites. This Sus scrofa (Pig) protein is Interleukin-12 subunit alpha (IL12A).